The sequence spans 230 residues: MTGLFPDNPKSPIDLLALEGQALRRGFFRIAGIDEAGRGPLAGPVVAAAVILPPGLLLPGVNDSKQLTEEKREELFDVIHREALAVGVGIGDHALVDRINILQATLSAMRDAVRALSMTPGFLLIDGISNIPMNIPQRTVKKGDSLSLSIASASIIAKVTRDRMMVEYDAQYPGYGFASHKGYGAASHLAAIAELGPCPIHRKTFSGVKEHLPSQPDCDTAGPSTGLFSF.

The RNase H type-2 domain maps to 28–217; it reads FRIAGIDEAG…VKEHLPSQPD (190 aa). The a divalent metal cation site is built by D34, E35, and D126. The tract at residues 211 to 230 is disordered; that stretch reads HLPSQPDCDTAGPSTGLFSF.

The protein belongs to the RNase HII family. Requires Mn(2+) as cofactor. Mg(2+) serves as cofactor.

The protein resides in the cytoplasm. The catalysed reaction is Endonucleolytic cleavage to 5'-phosphomonoester.. Endonuclease that specifically degrades the RNA of RNA-DNA hybrids. The chain is Ribonuclease HII from Geobacter sp. (strain M21).